Reading from the N-terminus, the 293-residue chain is Undecaprenyl-diphosphatase (293 aa).

8 consecutive transmembrane segments (helical) span residues I3 to P23, K43 to F63, A85 to I105, L109 to A129, F178 to G198, V203 to E223, I238 to L258, and F269 to V289.

It belongs to the UppP family.

Its subcellular location is the cell inner membrane. The catalysed reaction is di-trans,octa-cis-undecaprenyl diphosphate + H2O = di-trans,octa-cis-undecaprenyl phosphate + phosphate + H(+). Functionally, catalyzes the dephosphorylation of undecaprenyl diphosphate (UPP). Confers resistance to bacitracin. In Cupriavidus necator (strain ATCC 17699 / DSM 428 / KCTC 22496 / NCIMB 10442 / H16 / Stanier 337) (Ralstonia eutropha), this protein is Undecaprenyl-diphosphatase.